The sequence spans 386 residues: Cytochrome b (386 aa).

Helical transmembrane passes span 32 to 52 (FGSL…TLAM), 76 to 98 (WLIR…LHMG), 113 to 133 (TWNI…LGYV), and 179 to 199 (FFSL…MHLI). Residues His-82 and His-96 each contribute to the heme b site. Residues His-183 and His-197 each contribute to the heme b site. His-202 contributes to the a ubiquinone binding site. 4 helical membrane passes run 226 to 246 (FLFK…IFVL), 290 to 310 (TLGV…PYLD), 322 to 342 (LSKI…ILGA), and 349 to 369 (FIIF…IITP).

It belongs to the cytochrome b family. In terms of assembly, fungal cytochrome b-c1 complex contains 10 subunits; 3 respiratory subunits, 2 core proteins and 5 low-molecular weight proteins. Cytochrome b-c1 complex is a homodimer. The cofactor is heme b.

Its subcellular location is the mitochondrion inner membrane. Its function is as follows. Component of the ubiquinol-cytochrome c reductase complex (complex III or cytochrome b-c1 complex) that is part of the mitochondrial respiratory chain. The b-c1 complex mediates electron transfer from ubiquinol to cytochrome c. Contributes to the generation of a proton gradient across the mitochondrial membrane that is then used for ATP synthesis. This chain is Cytochrome b (COB), found in Trichophyton rubrum (Athlete's foot fungus).